A 345-amino-acid chain; its full sequence is Ferredoxin--NADP reductase (345 aa).

FAD-binding residues include D38, Q46, Y51, V91, F129, D295, and T336.

The protein belongs to the ferredoxin--NADP reductase type 2 family. Homodimer. Requires FAD as cofactor.

The enzyme catalyses 2 reduced [2Fe-2S]-[ferredoxin] + NADP(+) + H(+) = 2 oxidized [2Fe-2S]-[ferredoxin] + NADPH. The protein is Ferredoxin--NADP reductase of Rhodospirillum rubrum (strain ATCC 11170 / ATH 1.1.1 / DSM 467 / LMG 4362 / NCIMB 8255 / S1).